The primary structure comprises 284 residues: 2,3,4,5-tetrahydropyridine-2,6-dicarboxylate N-succinyltransferase (284 aa).

Substrate is bound by residues Arg-111 and Asp-148.

The protein belongs to the transferase hexapeptide repeat family. Homotrimer.

The protein localises to the cytoplasm. It carries out the reaction (S)-2,3,4,5-tetrahydrodipicolinate + succinyl-CoA + H2O = (S)-2-succinylamino-6-oxoheptanedioate + CoA. It participates in amino-acid biosynthesis; L-lysine biosynthesis via DAP pathway; LL-2,6-diaminopimelate from (S)-tetrahydrodipicolinate (succinylase route): step 1/3. In Mesorhizobium japonicum (strain LMG 29417 / CECT 9101 / MAFF 303099) (Mesorhizobium loti (strain MAFF 303099)), this protein is 2,3,4,5-tetrahydropyridine-2,6-dicarboxylate N-succinyltransferase.